Here is a 125-residue protein sequence, read N- to C-terminus: MNVLYTKIFFILILTRTSSALKCVQCFTGYGNIVQDCNKTSYSEPKECADPLSNYCFIGTRYENGTEYIQRYCAIFSIKDQCIEKNNIKACIYTCETDGCNSASRLQISSLVTSIISVLYLITFX.

The first 20 residues, 1–20 (MNVLYTKIFFILILTRTSSA), serve as a signal peptide directing secretion.

The protein belongs to the scoloptoxin-05 family. In terms of processing, contains 4 disulfide bonds. Expressed by the venom gland.

It localises to the secreted. The chain is U-scoloptoxin(05)-Sm1a from Scolopendra morsitans (Tanzanian blue ringleg centipede).